The chain runs to 213 residues: Large ribosomal subunit protein bL25 (213 aa).

Residues 191 to 207 (AEPTDAPTAPAAAPGAE) show a composition bias toward low complexity. Positions 191 to 213 (AEPTDAPTAPAAAPGAEAPKDKA) are disordered.

Belongs to the bacterial ribosomal protein bL25 family. CTC subfamily. Part of the 50S ribosomal subunit; part of the 5S rRNA/L5/L18/L25 subcomplex. Contacts the 5S rRNA. Binds to the 5S rRNA independently of L5 and L18.

Its function is as follows. This is one of the proteins that binds to the 5S RNA in the ribosome where it forms part of the central protuberance. The polypeptide is Large ribosomal subunit protein bL25 (Polynucleobacter asymbioticus (strain DSM 18221 / CIP 109841 / QLW-P1DMWA-1) (Polynucleobacter necessarius subsp. asymbioticus)).